The sequence spans 38 residues: Photosystem II reaction center protein X (38 aa).

Residues 9 to 29 (IASLFAGAFIALAIGGVLVFI) form a helical membrane-spanning segment.

It belongs to the PsbX family. Type 1 subfamily. In terms of assembly, PSII is composed of 1 copy each of membrane proteins PsbA, PsbB, PsbC, PsbD, PsbE, PsbF, PsbH, PsbI, PsbJ, PsbK, PsbL, PsbM, PsbT, PsbX, PsbY, PsbZ, Psb30/Ycf12, at least 3 peripheral proteins of the oxygen-evolving complex and a large number of cofactors. It forms dimeric complexes.

The protein resides in the plastid. The protein localises to the chloroplast thylakoid membrane. Involved in the binding and/or turnover of quinones at the Q(B) site of photosystem II (PSII). PSII is a light-driven water plastoquinone oxidoreductase, using light energy to abstract electrons from H(2)O, generating a proton gradient subsequently used for ATP formation. The polypeptide is Photosystem II reaction center protein X (Phaeodactylum tricornutum (strain CCAP 1055/1)).